We begin with the raw amino-acid sequence, 222 residues long: Capsular polysaccharide type 8 biosynthesis protein cap8A (222 aa).

A run of 2 helical transmembrane segments spans residues 20 to 40 (ILII…FFVL) and 172 to 192 (VVNL…YIFF).

Belongs to the CpsC/CapA family.

It localises to the cell membrane. Its function is as follows. Required for the biosynthesis of type 8 capsular polysaccharide (Cap8/CP8). Might act as the chain-length regulator. This Staphylococcus aureus protein is Capsular polysaccharide type 8 biosynthesis protein cap8A (cap8A).